Here is a 525-residue protein sequence, read N- to C-terminus: GMP synthase [glutamine-hydrolyzing] (525 aa).

A Glutamine amidotransferase type-1 domain is found at 8–207 (KILILDFGSQ…ALDICGCAAN (200 aa)). The Nucleophile role is filled by cysteine 85. Residues histidine 181 and glutamate 183 contribute to the active site. The GMPS ATP-PPase domain maps to 208 to 400 (WKPSSIIEDA…LGLPYNMLYR (193 aa)). 235 to 241 (SGGVDSS) serves as a coordination point for ATP.

As to quaternary structure, homodimer.

It catalyses the reaction XMP + L-glutamine + ATP + H2O = GMP + L-glutamate + AMP + diphosphate + 2 H(+). The protein operates within purine metabolism; GMP biosynthesis; GMP from XMP (L-Gln route): step 1/1. In terms of biological role, catalyzes the synthesis of GMP from XMP. This is GMP synthase [glutamine-hydrolyzing] from Shewanella sp. (strain ANA-3).